We begin with the raw amino-acid sequence, 119 residues long: Anther-specific protein BCP1 (119 aa).

The N-terminal stretch at 1–23 (MGRQNVVVVFGLVFLAVLGLAAA) is a signal peptide. The span at 24–42 (ASSPSPSASPSKAPSTSTP) shows a compositional bias: low complexity. A disordered region spans residues 24 to 95 (ASSPSPSASP…PSGSADSADS (72 aa)). Residues 24 to 98 (ASSPSPSASP…SADSADSGAA (75 aa)) are Extracellular-facing. Residues 56-69 (TDDDAAASPGDDDV) show a composition bias toward acidic residues. Low complexity predominate over residues 82 to 95 (GSNGPSGSADSADS). A helical membrane pass occupies residues 99–118 (ALGVSAVVVGVTSIVGSFLF). Position 119 (phenylalanine 119) is a topological domain, cytoplasmic.

As to expression, expressed in mature pollen grains, developing microspores and tapetal cells.

It localises to the membrane. Its function is as follows. Required for pollen fertility and development. Active in both diploid tapetum and haploid microspores. Major pollen protein. This Brassica campestris (Field mustard) protein is Anther-specific protein BCP1 (BCP1).